A 246-amino-acid polypeptide reads, in one-letter code: tRNA (guanine-N(1)-)-methyltransferase (246 aa).

S-adenosyl-L-methionine contacts are provided by residues Gly-112 and 131–136 (IGDYVL).

This sequence belongs to the RNA methyltransferase TrmD family. Homodimer.

The protein resides in the cytoplasm. The catalysed reaction is guanosine(37) in tRNA + S-adenosyl-L-methionine = N(1)-methylguanosine(37) in tRNA + S-adenosyl-L-homocysteine + H(+). Specifically methylates guanosine-37 in various tRNAs. In Thermosipho africanus (strain TCF52B), this protein is tRNA (guanine-N(1)-)-methyltransferase.